The sequence spans 314 residues: Homoserine kinase (314 aa).

95 to 105 provides a ligand contact to ATP; the sequence is PHSRGLGSSAA.

The protein belongs to the GHMP kinase family. Homoserine kinase subfamily.

It localises to the cytoplasm. The enzyme catalyses L-homoserine + ATP = O-phospho-L-homoserine + ADP + H(+). It functions in the pathway amino-acid biosynthesis; L-threonine biosynthesis; L-threonine from L-aspartate: step 4/5. Catalyzes the ATP-dependent phosphorylation of L-homoserine to L-homoserine phosphate. This Mycobacterium sp. (strain JLS) protein is Homoserine kinase.